Here is a 603-residue protein sequence, read N- to C-terminus: Coagulation factor XII (603 aa).

An N-terminal signal peptide occupies residues 1–18 (GRLLLGSLLVSLESALSA). A Fibronectin type-II domain is found at 41–89 (VTGEPCYFPFQYNRQLYHHCIHKGRPGPRPWCATTPNFDQDQQWAYCLE). Cystine bridges form between Cys46/Cys72, Cys60/Cys87, Cys97/Cys109, Cys103/Cys118, Cys120/Cys129, Cys134/Cys162, Cys160/Cys169, Cys177/Cys188, Cys182/Cys197, Cys199/Cys208, Cys216/Cys294, Cys237/Cys276, Cys265/Cys289, Cys345/Cys472, Cys383/Cys399, Cys391/Cys461, Cys422/Cys425, Cys488/Cys557, Cys520/Cys536, and Cys547/Cys578. Residues 93–130 (VKDHCSKHNPCQRGGICVNTLSSPHCLCPDHLTGKHCQ) form the EGF-like 1 domain. Residues 132 to 172 (EKCFEPQLHRFFHENEIWFRTGPAGVAKCHCKGPDAHCKQM) form the Fibronectin type-I domain. In terms of domain architecture, EGF-like 2 spans 173 to 209 (HSQECQTNPCLNGGRCLEVEGHHLCDCPMGYTGPFCD). The region spanning 216 to 294 (CYEGRGVSYR…SWEYCDLAQC (79 aa)) is the Kringle domain. N-linked (GlcNAc...) asparagine glycans are attached at residues Asn248 and Asn270. Residues 359 to 602 (IVGGLVALPG…YLTWIQKHTA (244 aa)) enclose the Peptidase S1 domain. His398 functions as the Charge relay system in the catalytic mechanism. An N-linked (GlcNAc...) asparagine glycan is attached at Asn419. Asp447 functions as the Charge relay system in the catalytic mechanism. Ser551 (charge relay system) is an active-site residue.

This sequence belongs to the peptidase S1 family. In terms of assembly, interacts with HRG; the interaction, which is enhanced in the presence of zinc ions and inhibited by heparin-binding, inhibits factor XII autoactivation and contact-initiated coagulation. In terms of processing, O- and N-glycosylated.

The protein resides in the secreted. It catalyses the reaction Selective cleavage of Arg-|-Ile bonds in factor VII to form factor VIIa and factor XI to form factor XIa.. Its activity is regulated as follows. Activity is promoted in the presence of negatively charged surfaces. Its function is as follows. Factor XII is a serum glycoprotein that participates in the initiation of blood coagulation, fibrinolysis, and the generation of bradykinin and angiotensin. Prekallikrein is cleaved by factor XII to form kallikrein, which then cleaves factor XII first to alpha-factor XIIa and then trypsin cleaves it to beta-factor XIIa. Alpha-factor XIIa activates factor XI to factor XIa. The polypeptide is Coagulation factor XII (F12) (Cavia porcellus (Guinea pig)).